Here is a 460-residue protein sequence, read N- to C-terminus: ATP synthase subunit beta (460 aa).

150 to 157 (GGAGVGKT) serves as a coordination point for ATP.

It belongs to the ATPase alpha/beta chains family. As to quaternary structure, F-type ATPases have 2 components, CF(1) - the catalytic core - and CF(0) - the membrane proton channel. CF(1) has five subunits: alpha(3), beta(3), gamma(1), delta(1), epsilon(1). CF(0) has three main subunits: a(1), b(2) and c(9-12). The alpha and beta chains form an alternating ring which encloses part of the gamma chain. CF(1) is attached to CF(0) by a central stalk formed by the gamma and epsilon chains, while a peripheral stalk is formed by the delta and b chains.

The protein resides in the cell inner membrane. The catalysed reaction is ATP + H2O + 4 H(+)(in) = ADP + phosphate + 5 H(+)(out). Functionally, produces ATP from ADP in the presence of a proton gradient across the membrane. The catalytic sites are hosted primarily by the beta subunits. The sequence is that of ATP synthase subunit beta from Pectobacterium carotovorum subsp. carotovorum (strain PC1).